The following is a 161-amino-acid chain: MYRIGNGIDFHKLEINLNRPLILGGIECESEFALVGHSDADIILHAISDAILGALALGDIGQYFPDTDPSLKNIDSKIILVKCLELMKEKNFDLVNIDCTVIGERPKITPLKDRITKSLSNLLNLPLDCISVKATTTEKMGALGRQEGIGTFCSILLEKRS.

A divalent metal cation is bound by residues aspartate 9 and histidine 11. 4-CDP-2-C-methyl-D-erythritol 2-phosphate contacts are provided by residues 9-11 (DFH) and 37-38 (HS). Histidine 45 contributes to the a divalent metal cation binding site. 4-CDP-2-C-methyl-D-erythritol 2-phosphate-binding positions include 59–61 (DIG), 64–68 (FPDTD), 135–138 (TTTE), and arginine 145.

It belongs to the IspF family. As to quaternary structure, homotrimer. Requires a divalent metal cation as cofactor.

It carries out the reaction 4-CDP-2-C-methyl-D-erythritol 2-phosphate = 2-C-methyl-D-erythritol 2,4-cyclic diphosphate + CMP. The protein operates within isoprenoid biosynthesis; isopentenyl diphosphate biosynthesis via DXP pathway; isopentenyl diphosphate from 1-deoxy-D-xylulose 5-phosphate: step 4/6. In terms of biological role, involved in the biosynthesis of isopentenyl diphosphate (IPP) and dimethylallyl diphosphate (DMAPP), two major building blocks of isoprenoid compounds. Catalyzes the conversion of 4-diphosphocytidyl-2-C-methyl-D-erythritol 2-phosphate (CDP-ME2P) to 2-C-methyl-D-erythritol 2,4-cyclodiphosphate (ME-CPP) with a corresponding release of cytidine 5-monophosphate (CMP). The chain is 2-C-methyl-D-erythritol 2,4-cyclodiphosphate synthase from Leptospira interrogans serogroup Icterohaemorrhagiae serovar Lai (strain 56601).